A 1357-amino-acid chain; its full sequence is Major yolk protein (1357 aa).

An N-terminal signal peptide occupies residues 1 to 15 (MRAAILFCLVASSMA). Transferrin-like domains follow at residues 132–478 (VRWC…GEVY) and 493–1101 (AKIC…AIVK). N-linked (GlcNAc...) asparagine glycans are attached at residues Asn198, Asn227, Asn304, Asn310, Asn402, Asn499, Asn530, Asn541, Asn572, Asn578, Asn625, Asn639, Asn692, Asn732, Asn741, Asn1035, Asn1043, Asn1081, Asn1128, Asn1208, Asn1241, and Asn1258.

The protein belongs to the transferrin family. Synthesized in the intestines of the females and males and also in ovaries and testis.

It is found in the secreted. Its function is as follows. May serve the following two functions: a classical role as a yolk protein precursor and probably shuttle iron to developing germ cells. The sequence is that of Major yolk protein from Strongylocentrotus purpuratus (Purple sea urchin).